A 218-amino-acid chain; its full sequence is Octanoyltransferase (218 aa).

One can recognise a BPL/LPL catalytic domain in the interval 30-217; sequence GEAGELVWLV…SFARNFPPLA (188 aa). Substrate contacts are provided by residues 68–75, 148–150, and 161–163; these read RGGQYTYH, AIG, and GIA. Catalysis depends on C179, which acts as the Acyl-thioester intermediate.

Belongs to the LipB family.

The protein localises to the cytoplasm. The enzyme catalyses octanoyl-[ACP] + L-lysyl-[protein] = N(6)-octanoyl-L-lysyl-[protein] + holo-[ACP] + H(+). It participates in protein modification; protein lipoylation via endogenous pathway; protein N(6)-(lipoyl)lysine from octanoyl-[acyl-carrier-protein]: step 1/2. Its function is as follows. Catalyzes the transfer of endogenously produced octanoic acid from octanoyl-acyl-carrier-protein onto the lipoyl domains of lipoate-dependent enzymes. Lipoyl-ACP can also act as a substrate although octanoyl-ACP is likely to be the physiological substrate. The polypeptide is Octanoyltransferase (Paracoccus denitrificans (strain Pd 1222)).